A 424-amino-acid polypeptide reads, in one-letter code: ATP-sensitive inward rectifier potassium channel 8 (424 aa).

Residues 1–69 (MLARKSIIPE…IFTTLVDLKW (69 aa)) are Cytoplasmic-facing. The residue at position 6 (S6) is a Phosphoserine. The chain crosses the membrane as a helical span at residues 70–94 (RHTLVIFTMSFLCSWLLFAIMWWLV). Residues 95–126 (AFAHGDIYAYMEKSGMEKSGLESTVCVTNVRS) lie on the Extracellular side of the membrane. The segment at residues 127 to 138 (FTSAFLFSIEVQ) is an intramembrane region (helical; Pore-forming). The pore-forming intramembrane region spans 139 to 145 (VTIGFGG). The Selectivity filter motif lies at 140–145 (TIGFGG). Residues 146–154 (RMMTEECPL) lie on the Extracellular side of the membrane. Residues 155–176 (AITVLILQNIVGLIINAVMLGC) traverse the membrane as a helical segment. The Cytoplasmic portion of the chain corresponds to 177 to 424 (IFMKTAQAHR…PEGNQNTSES (248 aa)). The tract at residues 375-424 (SHQNSLRKRNSMRRNNSMRRNNSIRRNNSSLMVPKVQFMTPEGNQNTSES) is disordered. Low complexity predominate over residues 387 to 404 (RRNNSMRRNNSIRRNNSS).

It belongs to the inward rectifier-type potassium channel (TC 1.A.2.1) family. KCNJ8 subfamily. In terms of assembly, interacts with ABCC9. Predominantly detected in fetal and adult heart.

It localises to the membrane. The enzyme catalyses K(+)(in) = K(+)(out). Functionally, inward rectifier potassium channels are characterized by a greater tendency to allow potassium to flow into the cell rather than out of it. Their voltage dependence is regulated by the concentration of extracellular potassium; as external potassium is raised, the voltage range of the channel opening shifts to more positive voltages. The inward rectification is mainly due to the blockage of outward current by internal magnesium. This channel is activated by internal ATP and can be blocked by external barium. Can form a sulfonylurea-sensitive but ATP-insensitive potassium channel with ABCC9. The chain is ATP-sensitive inward rectifier potassium channel 8 (KCNJ8) from Homo sapiens (Human).